A 504-amino-acid polypeptide reads, in one-letter code: Histidine ammonia-lyase (504 aa).

A cross-link (5-imidazolinone (Ala-Gly)) is located at residues 142-144 (ASG). Residue serine 143 is modified to 2,3-didehydroalanine (Ser).

It belongs to the PAL/histidase family. Contains an active site 4-methylidene-imidazol-5-one (MIO), which is formed autocatalytically by cyclization and dehydration of residues Ala-Ser-Gly.

It localises to the cytoplasm. The enzyme catalyses L-histidine = trans-urocanate + NH4(+). It participates in amino-acid degradation; L-histidine degradation into L-glutamate; N-formimidoyl-L-glutamate from L-histidine: step 1/3. This Staphylococcus aureus (strain USA300) protein is Histidine ammonia-lyase.